Reading from the N-terminus, the 1481-residue chain is MALNGRTMFPAFKYYAIDYLQEDIIKERLYRDALLLQIPSCLNQDKNIIDDKYRTPWTRAIPVQEMEDNSVLEQWRTRFCVEGVPEKKTVTGVMINGTFEEIVPSSNPNSPPGIENDKLFPSKDYVDDFIPVKCSLYYPGVKAEHQGLLIDEEMIFMNKAMDNHLPTVNGLLSRLKLYLVKDPFLDFKEELSGKDNFTEYFSVQECSEPFVRDFHMAEETFCKKKLPSVFPSGFKSLISTNPKQEILILPPSKLKKPLNSIPKIMDSVDESECFKGDITSKHEFDTEDIKCNSTENLTFASLCEPECSEPGDLEMPPTHLILPRQHSAVSSLHMGFQTFPFSATCKINLLSAGESANKYCMLWQLGGCRNSWVSFLLTVPRFQEPSSQYSLADMRNIFSVKGDSLVINPAKAKGWRQARLHPIMAETLAHLKAYLCHNGLSSQETKLEIFLPTKVFQLESWLELKSRPLPIVPISEKSTDVHQLHPQKRPIPSSEKEVPHLCLSGESISVKKSKVEANPKNDQEPEARIMQKPENSCVGLGCSSQVPSAESASSSQIQASYDKKQDDLDLLSEFIILRSKHQTFPSEADVDVKSHDHDQNNEFQDKEKYSLTLQEESLVASNSKAPEERCEERTDGVIEIPASDTQCQAYCLLEATANPILKELVCLCTYPAANWKFATVNFDQTRFFLKEQEKKINDATHPDKNDDRKMTFRHAALLHLLITIRDVLLTCNLDTALGYLSNAKDIYKSVLDSRLDNIWRQLKILQFIKEKRPKSNYKIQELQCQILSRLQNQQQMKVLIIIRMDSDGEKHLLIKTLKKIEGLTMTVLRSNDRKKILETTSILKGTNACVVVHNHSIGADFPWSSFSLVVEYNHVGHSCWAEHCQLLDIPFLAFKVAVPDTALQRDALLDGFGGFLLKIPIPYVFFASEGLLNTPEILRLLESNYNITLVERCCCGSLKLFGSTECYVVVTVDEHTAIVVQDLEELHHEKASDNIIMRLMALSFQYSCCWIILYSKETLNSQYHLTEETLRHLAQVYAALVSSGLKSEELDVKLIIAPGVEETALIIRQIADHNLMTSTRDPHEWLDKSWVEVSPSKEEMSLLDFPCINPLVAQLMLHRAPSLHWLLIATPAELQELLPQVPGKVLKHFCSITSLFKISSPSMTKSSQISSLQEDMNQTDLFISQSSAPIIQEQEEYYPYEDSEGTSSSPVELRATPCMLPSAAPHSQRGCWEDPSCGPDPVQNNPSLMNAESKKVTWPSVPSWSDSESDVFSLARTQVSCEPIMTLTDSQRRGTNGFVNCPEAKGPRNMQVSTPVFLPENSQSHLHWDFKKNSCRKQIYSFNPSCGTEQTTYNKWYSWKDDFSSNQPECLWDEMEDVTYRNANAGTRETFWRELPAVPSWDSPCASDSNANQRGFKGLDFCQRAGNYLGQRSLPVSSSNWGDYKTPTDLMYSQVPQPKKRRLMYEKVPGRVDGQTRLKFL.

Disordered stretches follow at residues threonine 479–valine 498 and lysine 512–serine 560. Positions serine 513–glutamine 531 are enriched in basic and acidic residues. Low complexity predominate over residues serine 543 to serine 560.

It belongs to the XPF family. Highly divergent. Interacts with TEX11. Interacts with SPO16. Mainly expressed in adult testis.

Its subcellular location is the chromosome. Its function is as follows. ATPase required during meiosis for the formation of crossover recombination intermediates. Binds DNA: preferentially binds to single-stranded DNA and DNA branched structures. Does not show nuclease activity in vitro, but shows ATPase activity, which is stimulated by the presence of single-stranded DNA. Plays a key role in homologous recombination and crossing-over in meiotic prophase I in male and female germ cells. Required for proper synaptonemal complex assembly and homologous chromosome pairing. Required for recruitment of TEX11 and MSH4 to recombination intermediates. In Mus musculus (Mouse), this protein is Protein shortage in chiasmata 1 ortholog.